Consider the following 709-residue polypeptide: MDSGSGFDPDTGNNKGNGSGGGNGYGERKFGAFFKRVEPFLPKKDLNPRDLRSWAKKTGFVSDYSGETSTSTRTKFGESSDFDLPKGRDQVVTGSSHKTEIDPILGRNRPEIEHVTGSEPVSREEEERRLNRNEATPETENEGGKINKDLENGFYYPGGGGESSEDGQWPKPILMKFGLRDNPGFVPLIYYGLQHYLSLVGSLVFIPLVIVPAMDGSDKDTASVISTMLLLTGVTTILHCYFGTRLPLVQGSSFVYLAPVLVVINSEEFRNLTEHKFRDTMRELQGAIIVGSLFQCILGFSGLMSLLLRFINPVVVAPTVAAVGLAFFSYGFPQAGTCVEISVPLILLLLIFTLYLRGVSLFGHRLFRIYAVPLSALLIWTYAFFLTVGGAYDYRGCNADIPSSNILIDECKKHVYTMKHCRTDASNAWRTASWVRIPYPFQWGFPNFHMRTSIIMIFVSLVASVDSVGTYHSASMIVNAKRPTRGIVSRGIALEGFCSLLAGIWGSGTGSTTLTENIHTINITKVASRRALVIGAMFLIVLSFLGKLGAILASIPQALAASVLCFIWALTVSLGLSNLRYTQTASFRNITIVGVSLFLGLSIPAYFQQYQPLSSLILPSYYIPFGAASSGPFQTGIEQLDFAMNAVLSLNMVVTFLLAFILDNTVPGSKEERGVYVWTRAEDMQMDPEMRADYSLPRKFAQIFGCRCC.

2 disordered regions span residues 1–28 and 58–167; these read MDSG…YGER and TGFV…SEDG. Residues 15–25 show a composition bias toward gly residues; sequence KGNGSGGGNGY. Residues 65–74 show a composition bias toward polar residues; the sequence is SGETSTSTRT. Basic and acidic residues-rich tracts occupy residues 75–89, 108–132, and 142–151; these read KFGE…KGRD, NRPE…RLNR, and EGGKINKDLE. A run of 12 helical transmembrane segments spans residues 196–216, 222–242, 246–266, 288–308, 310–330, 336–356, 369–389, 454–474, 532–552, 555–575, 590–610, and 642–662; these read YLSL…AMDG, ASVI…HCYF, LPLV…VINS, IIVG…SLLL, FINP…FFSY, GTCV…TLYL, IYAV…LTVG, IIMI…YHSA, LVIG…GAIL, IPQA…VSLG, ITIV…FQQY, and FAMN…AFIL.

This sequence belongs to the nucleobase:cation symporter-2 (NCS2) (TC 2.A.40) family. As to expression, expressed in leaf primordia and vasculature of pedicels, rosette leaves, sepals, carpels and siliques. Expressed in the root central cylinder.

The protein resides in the membrane. The polypeptide is Nucleobase-ascorbate transporter 11 (NAT11) (Arabidopsis thaliana (Mouse-ear cress)).